The chain runs to 116 residues: MSQQLLEELGRRQYRTDIPEFRVGDTVRVGVKVVEGNRERVQDFEGVVIRRRGEGINENFTVRRIASHGIGVERTFLLHAPRIDSIKVIRQGKVRRAKLYYLRGRAGKAARIRERR.

Belongs to the bacterial ribosomal protein bL19 family.

Its function is as follows. This protein is located at the 30S-50S ribosomal subunit interface and may play a role in the structure and function of the aminoacyl-tRNA binding site. This Chloroflexus aurantiacus (strain ATCC 29366 / DSM 635 / J-10-fl) protein is Large ribosomal subunit protein bL19.